The chain runs to 490 residues: Betaine aldehyde dehydrogenase (490 aa).

K(+) contacts are provided by Thr26, Ile27, and Asp93. 150–152 (GAW) is a binding site for NAD(+). Catalysis depends on Lys162, which acts as the Charge relay system. Position 176 to 179 (176 to 179 (KPSE)) interacts with NAD(+). Val180 is a K(+) binding site. Residue 230 to 233 (GVAS) participates in NAD(+) binding. Residue Leu246 participates in K(+) binding. The active-site Proton acceptor is Glu252. 3 residues coordinate NAD(+): Gly254, Cys286, and Glu387. Cys286 functions as the Nucleophile in the catalytic mechanism. Cysteine sulfenic acid (-SOH) is present on Cys286. Residues Lys457 and Gly460 each coordinate K(+). Glu464 functions as the Charge relay system in the catalytic mechanism.

This sequence belongs to the aldehyde dehydrogenase family. In terms of assembly, dimer of dimers. It depends on K(+) as a cofactor.

It catalyses the reaction betaine aldehyde + NAD(+) + H2O = glycine betaine + NADH + 2 H(+). It participates in amine and polyamine biosynthesis; betaine biosynthesis via choline pathway; betaine from betaine aldehyde: step 1/1. In terms of biological role, involved in the biosynthesis of the osmoprotectant glycine betaine. Catalyzes the irreversible oxidation of betaine aldehyde to the corresponding acid. This is Betaine aldehyde dehydrogenase from Escherichia coli O45:K1 (strain S88 / ExPEC).